Here is a 216-residue protein sequence, read N- to C-terminus: uncharacterized protein (216 aa).

A helical transmembrane segment spans residues 5 to 25; the sequence is YVKALVAVTVALGVLLPSTIS. Composition is skewed to low complexity over residues 28–67 and 89–108; these read KSFS…SSSS and KASS…ATSK. The disordered stretch occupies residues 28-115; it reads KSFSGRSSSS…TSKVTGKTYS (88 aa). 2 helical membrane-spanning segments follow: residues 137-157 and 183-203; these read GFAP…MFMI and IAWI…IALI.

The protein resides in the cell membrane. This is an uncharacterized protein from Bacillus subtilis (strain 168).